Reading from the N-terminus, the 891-residue chain is MDALRKNIGMDLIGGAHDMDRFDSLHETAAFLPIIQGPENKMICAFINPETKGILKVYPEHLGFFLEKIGTEAELRAMVGIATAVMDSVDSEVVYTPDDSVAVSQLPTPELLVEARRLLDVLAASVEKKRVKIGGGSTGVSYAVVLARLETRVSWVPHNAFLELAQLYTTVYRNFYGLGDFLALVATSLHLDNIWPLAVTRKITTPLFVDTVKQEEVEMEVNGEQMVLSQKYVTFKAFKGFVLETDSEGGLSESDAADDPFLAESITLKLEKNQMTKMMDRDLMLKTAILSIRDENPRIKRAKNNIKLVDEFFMGIDRMAQPAFVKLAKKLMGSAHMVAILQSTLRSSILSWGLNDVAGTNTTMSDPELLNKLRRQTYVRMLADLSLLKVSRTPMGMFSVKDVSVKLDDRYWQGKKDATADQDKILQFYNQQGPTTFIEWLNKIGIESLEIPEKREPGKVFPVNCLWSVYNSTEFTEFGTLTVNSTGKGATQSGTKHNSCSDLSDLGKFRYVVRATPGTPPASILGLMHLIRTALFGVVCVSIHMAGEFFAEENLDLELNSNNKAATTVMRKMGDQFFRGYFFNLGNDDKKVKSSFDMIFRVFGAKGRALLSRKDGNGPNLRRSNAFNGLEWLRKKVKARPELANNMRRAIRNLLERYDVQAMILDQAETRSLYYLRPMFMTPFKTELQASTIISKKADFNNAPTLLHVNLTSVTISPTNTHFTLPLAPIFNKWDQHKVYGIILEMNTNVYSQATRGTWTATGGGQFFGADVGIDSLMSSLLSQVSEDEPVTSELINMFSLDKVRYDTVVERLKALSRYEETEPPVYGEDLVLSRELEQSDELDCGTENNEPLVLQPFEKDCSRKRAATTLSELWAGPSTKISRIEGDDED.

This is an uncharacterized protein from Ictalurid herpesvirus 1 (strain Auburn) (IcHV-1).